The primary structure comprises 378 residues: Beta-1,3-galactosyltransferase 4 (378 aa).

Topologically, residues 1 to 8 (MQLRLFRR) are cytoplasmic. A helical; Signal-anchor for type II membrane protein membrane pass occupies residues 9 to 19 (LLLAALLLVIV). At 20 to 378 (WTLFGPSGLG…RCRAIAWLQS (359 aa)) the chain is on the lumenal side. Asparagine 149 carries N-linked (GlcNAc...) asparagine glycosylation.

This sequence belongs to the glycosyltransferase 31 family. In terms of tissue distribution, highly expressed in heart, skeletal muscle and pancreas and, to a lesser extent, in brain, placenta, kidney, liver and lung.

The protein localises to the golgi apparatus membrane. It carries out the reaction a ganglioside GM2 (d18:1(4E)) + UDP-alpha-D-galactose = a ganglioside GM1 (d18:1(4E)) + UDP + H(+). The catalysed reaction is a ganglioside GM2 + UDP-alpha-D-galactose = a ganglioside GM1 + UDP + H(+). It catalyses the reaction a ganglioside GD2 (d18:1(4E)) + UDP-alpha-D-galactose = a ganglioside GD1b (d18:1(4E)) + UDP + H(+). The enzyme catalyses a ganglioside GA2 (d18:1(4E)) + UDP-alpha-D-galactose = a ganglioside GA1 (d18:1(4E)) + UDP + H(+). It functions in the pathway protein modification; protein glycosylation. Functionally, involved in GM1/GD1B/GA1 ganglioside biosynthesis. This chain is Beta-1,3-galactosyltransferase 4, found in Homo sapiens (Human).